Consider the following 80-residue polypeptide: U-poneritoxin(01)-Om3a (80 aa).

An N-terminal signal peptide occupies residues 1–25 (MKPSGLALAFLVVFMMAIMYNSVQA). A propeptide spanning residues 26–39 (AAIADADAEAEAIA) is cleaved from the precursor.

It belongs to the formicidae venom precursor-01 superfamily. In terms of processing, truncated sequences of this peptide have also been found in the venom. It is possible they have been cleaved in the venom. As to expression, expressed by the venom gland.

Its subcellular location is the secreted. Its function is as follows. Cationic amphipathic alpha-helical peptide with antimicrobial activities against E.coli (MIC=3.1 uM), S.aureus (MIC=25 uM), and S.cerevisiae (MIC=50 uM). Also shows histamine-releasing activity (37.5% at 10 uM). Does not show hemolytic activity, even at 50 uM. In Odontomachus monticola (Trap-jaw ant), this protein is U-poneritoxin(01)-Om3a.